The chain runs to 32 residues: Cyclotide glopa A (32 aa).

Positions 1–32 form a cross-link, cyclopeptide (Gly-Asn); it reads GGSIPCIETCVWTGCFLVPGCSCKSDKKCYLN. 3 disulfides stabilise this stretch: Cys6/Cys21, Cys10/Cys23, and Cys15/Cys29.

This is a cyclic peptide.

Probably participates in a plant defense mechanism. This chain is Cyclotide glopa A, found in Gloeospermum pauciflorum.